The following is a 1913-amino-acid chain: Protein TIC 214 (1913 aa).

5 helical membrane passes run 18 to 38 (IINSVVVVGLYYGFLTTFSIG), 64 to 84 (FITGQLMMFISIYYAPLHLAL), 124 to 144 (LSIQCVFLTNLIFQLFNHLML), 172 to 192 (VGWLIGHILFMKWVGLVVSWI), and 214 to 234 (LKSAIAQILSIIFFIACVNYL). Disordered stretches follow at residues 245-330 (KLNE…ETEE), 707-734 (YTDKNQNRDQDPNPNTDNTTTENDNSDT), and 1605-1652 (EKED…RKKK). The segment covering 260–289 (KESQKSKESEEERDVEKETTSETKETKQEQ) has biased composition (basic and acidic residues). The segment covering 303–314 (EKEDPDKIDETE) has biased composition (acidic residues). A compositionally biased stretch (basic and acidic residues) spans 315-330 (EIRVNGKEKKKDETEE). Positions 718–729 (PNPNTDNTTTEN) are enriched in low complexity.

This sequence belongs to the TIC214 family. In terms of assembly, part of the Tic complex.

It is found in the plastid. Its subcellular location is the chloroplast inner membrane. Involved in protein precursor import into chloroplasts. May be part of an intermediate translocation complex acting as a protein-conducting channel at the inner envelope. This chain is Protein TIC 214, found in Acorus calamus var. americanus (American sweet flag).